The chain runs to 247 residues: Protein-L-isoaspartate O-methyltransferase 2 (247 aa).

S97 is a catalytic residue.

Belongs to the methyltransferase superfamily. L-isoaspartyl/D-aspartyl protein methyltransferase family.

The protein localises to the cytoplasm. The enzyme catalyses [protein]-L-isoaspartate + S-adenosyl-L-methionine = [protein]-L-isoaspartate alpha-methyl ester + S-adenosyl-L-homocysteine. Functionally, catalyzes the methyl esterification of L-isoaspartyl residues in peptides and proteins that result from spontaneous decomposition of normal L-aspartyl and L-asparaginyl residues. It plays a role in the repair and/or degradation of damaged proteins. This Syntrophobacter fumaroxidans (strain DSM 10017 / MPOB) protein is Protein-L-isoaspartate O-methyltransferase 2.